The sequence spans 59 residues: UPF0434 protein RHOS4_00640 (59 aa).

This sequence belongs to the UPF0434 family.

The protein is UPF0434 protein RHOS4_00640 of Cereibacter sphaeroides (strain ATCC 17023 / DSM 158 / JCM 6121 / CCUG 31486 / LMG 2827 / NBRC 12203 / NCIMB 8253 / ATH 2.4.1.) (Rhodobacter sphaeroides).